Consider the following 26-residue polypeptide: Omega-conotoxin CVIC (26 aa).

Disulfide bonds link C1/C16, C8/C20, and C15/C26. C26 is subject to Cysteine amide.

Belongs to the conotoxin O1 superfamily. As to expression, expressed by the venom duct.

The protein resides in the secreted. Omega-conotoxins act at presynaptic membranes, they bind and block voltage-gated calcium channels (Cav). This toxin blocks N-, P- and Q-type calcium channels. The protein is Omega-conotoxin CVIC of Conus catus (Cat cone).